A 359-amino-acid polypeptide reads, in one-letter code: Trans-enoyl reductase RAP1 (359 aa).

Residue 49–52 (CDFK) coordinates NADP(+). 137-144 (TCIATACM) is a binding site for substrate. NADP(+) contacts are provided by residues 195-198 (SPKN), Tyr213, and 260-261 (LE). 281–285 (GQMIL) is a binding site for substrate. 350-351 (VA) is a binding site for NADP(+).

This sequence belongs to the zinc-containing alcohol dehydrogenase family. Monomer.

Its pathway is secondary metabolite biosynthesis. Trans-enoyl reductase; part of the gene cluster that mediates the biosynthesis of a tyrosine-derived cytochalasan acting as a fungal signal recognized by resistant rice plants and leads to avirulence in Pi33 resistant rice cultivars. The first step in the pathway is catalyzed by the hybrid PKS-NRPS ACE1, assisted by the enoyl reductase RAP1, that are responsible for fusion of the tyrosine precursor and the polyketide backbone. The polyketide synthase module (PKS) of ACE1 is responsible for the synthesis of the polyketide backbone and the downstream nonribosomal peptide synthetase (NRPS) amidates the carboxyl end of the polyketide with the tyrosine precursor. Because ACE1 lacks a designated enoylreductase (ER) domain, the required activity is provided the enoyl reductase RAP1. Reduction by the hydrolyase ORFZ, followed by dehydration and intra-molecular Diels-Alder cyclization by the Diels-Alderase ORF3 then yield the required isoindolone-fused macrocycle. A number of oxidative steps catalyzed by the tailoring enzymes identified within the cluster, including cytochrome P450 monooxygenases CYP1 to CYP4, the FAD-linked oxidoreductase OXR2 and the short-chain dehydrogenase/reductase OXR1, are further required to afford the final cytochalasans that confer avirulence and which have still to be identified. The monooxygenase CYP1 has been shown to be a site-selective C-18 hydroxylase whereas the function of CYP3 is the site-selective epoxidation of the C-6/C-7 olefin that is present in some intermediate compounds. Finally, SYN2 and RAP2 are not required for avirulence in Pi33 resistant rice cultivars. This is Trans-enoyl reductase RAP1 from Pyricularia oryzae (strain 70-15 / ATCC MYA-4617 / FGSC 8958) (Rice blast fungus).